Here is a 425-residue protein sequence, read N- to C-terminus: Serine--tRNA ligase (425 aa).

231-233 contacts L-serine; sequence TAE. Position 262–264 (262–264) interacts with ATP; sequence RSE. E285 lines the L-serine pocket. 349 to 352 provides a ligand contact to ATP; sequence EISS. L-serine is bound at residue S385.

It belongs to the class-II aminoacyl-tRNA synthetase family. Type-1 seryl-tRNA synthetase subfamily. Homodimer. The tRNA molecule binds across the dimer.

It localises to the cytoplasm. The enzyme catalyses tRNA(Ser) + L-serine + ATP = L-seryl-tRNA(Ser) + AMP + diphosphate + H(+). It carries out the reaction tRNA(Sec) + L-serine + ATP = L-seryl-tRNA(Sec) + AMP + diphosphate + H(+). Its pathway is aminoacyl-tRNA biosynthesis; selenocysteinyl-tRNA(Sec) biosynthesis; L-seryl-tRNA(Sec) from L-serine and tRNA(Sec): step 1/1. Catalyzes the attachment of serine to tRNA(Ser). Is also able to aminoacylate tRNA(Sec) with serine, to form the misacylated tRNA L-seryl-tRNA(Sec), which will be further converted into selenocysteinyl-tRNA(Sec). The chain is Serine--tRNA ligase from Halalkalibacterium halodurans (strain ATCC BAA-125 / DSM 18197 / FERM 7344 / JCM 9153 / C-125) (Bacillus halodurans).